A 175-amino-acid polypeptide reads, in one-letter code: Probable S-adenosyl-L-methionine-binding protein VirR (175 aa).

Residues Leu-35–Pro-165 enclose the TsaA-like domain. Residues Pro-52–Gln-54, His-90–Glu-91, Arg-114, Thr-124, and Leu-145–Thr-148 contribute to the S-adenosyl-L-methionine site.

It belongs to the tRNA methyltransferase O family.

The protein is Probable S-adenosyl-L-methionine-binding protein VirR (virR) of Rhizobium radiobacter (Agrobacterium tumefaciens).